A 931-amino-acid chain; its full sequence is Synaptopodin (931 aa).

2 disordered regions span residues 56 to 78 (EEEGTSKSRVNHGTPPLSRAPAI) and 113 to 243 (ASVS…MEGY). Phosphoserine is present on serine 134. A compositionally biased stretch (basic and acidic residues) spans 136–148 (TEKDLKEAKERSQ). Polar residues-rich tracts occupy residues 153–164 (QLTTPPSSNSRG) and 188–200 (PKLSQEALQTGHP). A phosphoserine mark is found at serine 202, serine 222, and serine 258. The segment covering 214-232 (PTSPSKPGSPKHSSSQSPS) has biased composition (low complexity). The disordered stretch occupies residues 280-420 (GLHLSQNRET…SSSGPPAADL (141 aa)). 2 stretches are compositionally biased toward polar residues: residues 282–293 (HLSQNRETQQSS) and 309–370 (INQN…NTPS). Positions 373–384 (DGQRPVPAEEVR) are enriched in basic and acidic residues. Residues serine 490 and serine 514 each carry the phosphoserine modification. Disordered regions lie at residues 542–591 (RRPL…KGQV) and 691–711 (SPRIQAKPKPKPNQNLSEASG). Phosphothreonine is present on threonine 549. Residues 551–554 (PPTY) carry the PPxY motif motif. Over residues 556–568 (ETLSTAPVASQVR) the composition is skewed to polar residues. A Phosphoserine modification is found at serine 569. Positions 569–580 (SPPSYSTLYPSS) are enriched in low complexity. Positions 570–573 (PPSY) match the PPxY motif motif. Serine 691, serine 742, serine 746, and serine 767 each carry phosphoserine. Threonine 771 bears the Phosphothreonine mark. The interval 775–918 (SLYHGYLPEN…RPSFSTRNAG (144 aa)) is disordered. Over residues 816 to 841 (SSRATSSRASSRTVSPRAASPAKPSS) the composition is skewed to low complexity. Position 835 is a phosphoserine (serine 835). Position 850 is an omega-N-methylarginine (arginine 850). Residue serine 856 is modified to Phosphoserine. The segment covering 874 to 895 (VQDSLQPTAVSPTYSSDISPVS) has biased composition (polar residues).

This sequence belongs to the synaptopodin family. In terms of assembly, interacts with BAIAP1. Interacts with actin. Interacts (via PPxY motifs) with WWC1 (via WW domains). Post-translationally, O-glycosylated. Expressed at high levels in brain and at moderate, but still significant levels in the heart, skeletal muscle, lung and kidney. In brain, expressed in the cerebral cortex, hippocampus, olfactory bulb and striatum.

The protein resides in the cytoplasm. It is found in the cytoskeleton. It localises to the cell junction. Its subcellular location is the tight junction. The protein localises to the perikaryon. The protein resides in the cell projection. It is found in the dendritic spine. It localises to the postsynaptic density. Its subcellular location is the synapse. The protein localises to the cytosol. Actin-associated protein that may play a role in modulating actin-based shape and motility of dendritic spines and renal podocyte foot processes. Seems to be essential for the formation of spine apparatuses in spines of telencephalic neurons, which is involved in synaptic plasticity. This chain is Synaptopodin (Synpo), found in Rattus norvegicus (Rat).